Here is a 494-residue protein sequence, read N- to C-terminus: Integrin beta-like protein 1 (494 aa).

The signal sequence occupies residues 1–23; the sequence is MHPPGFKNFLLLVSSLFFIGLSA. Intrachain disulfides connect Cys-40-Cys-71, Cys-51-Cys-69, Cys-63-Cys-74, Cys-76-Cys-89, Cys-91-Cys-112, Cys-96-Cys-110, Cys-104-Cys-115, Cys-117-Cys-126, Cys-132-Cys-159, Cys-143-Cys-157, Cys-151-Cys-162, Cys-164-Cys-178, Cys-180-Cys-202, Cys-185-Cys-200, Cys-194-Cys-205, Cys-207-Cys-216, Cys-220-Cys-247, Cys-231-Cys-245, Cys-239-Cys-250, Cys-252-Cys-269, Cys-271-Cys-296, Cys-276-Cys-294, Cys-288-Cys-299, Cys-301-Cys-310, Cys-316-Cys-343, Cys-327-Cys-341, Cys-335-Cys-346, Cys-348-Cys-361, Cys-363-Cys-384, Cys-368-Cys-382, Cys-376-Cys-387, Cys-389-Cys-398, Cys-404-Cys-431, Cys-415-Cys-429, Cys-423-Cys-434, Cys-436-Cys-448, Cys-450-Cys-471, Cys-455-Cys-469, Cys-463-Cys-474, and Cys-476-Cys-485. I-EGF domains are found at residues 40–90, 91–127, 132–179, 180–217, 220–270, 271–311, 316–362, 363–399, 404–449, and 450–486; these read CRLS…PLCE, CHDW…EACQ, CDLT…KFCE, CDDR…DKCE, CDIT…DTCE, CDER…KKCE, CPLS…KTCE, CDDR…KLCQ, CNMT…EFCD, and CDDR…NACE. Residues 51-95 form an I repeat; sequence CRAPGQPPGSALCHDRGRCECGVCICHVTEPGTYFGPLCECHDWV. Positions 51–494 are cysteine-rich tandem repeats; that stretch reads CRAPGQPPGS…CEIWLGTEYP (444 aa). Residues 96–142 form an II repeat; sequence CETYDGKTCAGHGTCDCGKCKCDVGWSGEACQYPTKCDLTKKISNQM. The stretch at 143-184 is one III repeat; the sequence is CKNSQDVICSNAGTCHCGRCKCDNSDGHGLIYGKFCECDDRE. An IV repeat occupies 185–230; sequence CIDDETEEICGGHGKCYCGNCYCEAGWHGDKCEFQCDITPWESKRR. One copy of the V repeat lies at 231-275; sequence CTSPDGKVCSNRGTCVCGECSCHDVDPTGDWGDIHGDTCECDERD. Residues 276–326 form a VI repeat; sequence CRAVYDRYSDDFCSGHGQCNCGRCDCRAGWYGKKCEHPKNCPLSAEESTRK. The stretch at 327 to 367 is one VII repeat; that stretch reads CQGSSDLPCSGRGRCECGRCTCYPPGDSRVYGKTCECDDRR. The VIII repeat unit spans residues 368–414; sequence CEDLDGVVCGGRGTCSCGRCVCEKGWFGKLCQHPRKCNMTEEQSRSL. An N-linked (GlcNAc...) asparagine glycan is attached at Asn-405. The stretch at 415–454 is one IX repeat; sequence CESADGTLCSGKGSCHCGKCICSGEEWYISGEFCDCDDRD. The X repeat unit spans residues 455 to 494; the sequence is CDKHDGLICTGNGICSCGNCECWDGWNGNACEIWLGTEYP.

The protein localises to the secreted. The protein is Integrin beta-like protein 1 (Itgbl1) of Rattus norvegicus (Rat).